A 1077-amino-acid polypeptide reads, in one-letter code: Receptor-type guanylate cyclase daf-11 (1077 aa).

N-linked (GlcNAc...) asparagine glycans are attached at residues asparagine 14, asparagine 112, asparagine 149, and asparagine 311. A helical transmembrane segment spans residues threonine 335–leucine 355. The Protein kinase domain occupies leucine 355 to leucine 695. The Cytoplasmic segment spans residues threonine 356–asparagine 1077. The Guanylate cyclase domain maps to threonine 765–glutamate 895. Residues aspartate 770, isoleucine 771, and aspartate 814 each coordinate Mg(2+). A coiled-coil region spans residues lysine 983 to glutamate 1034. The tract at residues threonine 1048 to asparagine 1077 is disordered.

This sequence belongs to the adenylyl cyclase class-4/guanylyl cyclase family. Expressed in sensory neurons including ASI, ASJ, ASK, AWB and AWC. Expressed in ASJ neurons in the dauer stage.

Its subcellular location is the cell membrane. It is found in the cell projection. It localises to the dendrite. The protein resides in the cilium. The protein localises to the perikaryon. The enzyme catalyses GTP = 3',5'-cyclic GMP + diphosphate. Functionally, guanylate cyclase involved in the production of the second messenger cGMP. In addition, regulates cGMP levels by controlling the transcription of 3',5'-cyclic phosphodiesterase pde-1 and pde-5 mRNAs. Involved in the olfactory, light and pheromone sensing pathways. Part of the chemosensory mechanism of the ASJ sensory neuron that controls dauer formation and dauer recovery. Promotes the calcium flux in ASJ sensory neurons in response to onset and removal of a nitric oxide (NO) stimulus and is thereby required for the behavioral avoidance response to NO-producing organisms like P.aeruginosa. In ASI and ASJ sensory neurons, controls dauer formation and behavioral response to P.aeruginosa by up-regulating the transcription of daf-7, a member of the TGF-beta family. Required for the chemotaxis responses to non-volatile and volatile attractants mediated by the sensory neurons ASE and AWC respectively. Required in ASJ neurons for phototransduction downstream of G protein coupled-photoreceptor lite-1. Plays a role in the development of ASJ sensory neuron axons during late larval stages and in the maintenance of normal axon morphology in adults. Required to maintain the expression of putative olfactory receptor str-2 in one of the two AWC neurons in adults. Regulates, via the production of cGMP, lifespan (in some environmental conditions), sensitivity to oxidative stress and entry into quiescence triggered by satiety. In AWB and AWC sensory neurons, mediates the recognition of food odors which subsequently allows for the detection of preferred food sources. In Caenorhabditis elegans, this protein is Receptor-type guanylate cyclase daf-11.